Consider the following 535-residue polypeptide: Cytochrome P450 4c3 (535 aa).

Glutamate 342 and cysteine 481 together coordinate heme.

Belongs to the cytochrome P450 family. Heme serves as cofactor.

The protein localises to the endoplasmic reticulum membrane. It is found in the microsome membrane. In terms of biological role, may be involved in the metabolism of insect hormones and in the breakdown of synthetic insecticides. The sequence is that of Cytochrome P450 4c3 (Cyp4c3) from Drosophila melanogaster (Fruit fly).